Consider the following 677-residue polypeptide: Methionine--tRNA ligase (677 aa).

Positions 15–25 (PYANGSIHLGH) match the 'HIGH' region motif. The Zn(2+) site is built by Cys146, Cys149, Cys159, and Cys162. Positions 333–337 (KMSKS) match the 'KMSKS' region motif. Lys336 contacts ATP. Residues 575–677 (DFAKVDLRVA…AGAKPGHQVK (103 aa)) enclose the tRNA-binding domain.

Belongs to the class-I aminoacyl-tRNA synthetase family. MetG type 1 subfamily. Homodimer. The cofactor is Zn(2+).

The protein localises to the cytoplasm. The enzyme catalyses tRNA(Met) + L-methionine + ATP = L-methionyl-tRNA(Met) + AMP + diphosphate. Its function is as follows. Is required not only for elongation of protein synthesis but also for the initiation of all mRNA translation through initiator tRNA(fMet) aminoacylation. This chain is Methionine--tRNA ligase (metG), found in Escherichia coli (strain K12).